We begin with the raw amino-acid sequence, 141 residues long: Protein C19orf12 (141 aa).

The helical transmembrane segment at 40–60 (FVGGLVGGPPGLAVGGAVGGL) threads the bilayer.

Belongs to the C19orf12 family.

The protein localises to the mitochondrion. It localises to the mitochondrion membrane. The protein resides in the endoplasmic reticulum. It is found in the cytoplasm. Its subcellular location is the cytosol. In Homo sapiens (Human), this protein is Protein C19orf12 (C19orf12).